We begin with the raw amino-acid sequence, 239 residues long: 4-hydroxy-tetrahydrodipicolinate reductase (239 aa).

NAD(+)-binding positions include 8–13 (GSTGKM), 78–80 (GTT), and 102–105 (SANM). The active-site Proton donor/acceptor is His134. Residue His135 coordinates (S)-2,3,4,5-tetrahydrodipicolinate. Residue Lys138 is the Proton donor of the active site. 144 to 145 (GT) serves as a coordination point for (S)-2,3,4,5-tetrahydrodipicolinate.

The protein belongs to the DapB family.

The protein resides in the cytoplasm. It catalyses the reaction (S)-2,3,4,5-tetrahydrodipicolinate + NAD(+) + H2O = (2S,4S)-4-hydroxy-2,3,4,5-tetrahydrodipicolinate + NADH + H(+). It carries out the reaction (S)-2,3,4,5-tetrahydrodipicolinate + NADP(+) + H2O = (2S,4S)-4-hydroxy-2,3,4,5-tetrahydrodipicolinate + NADPH + H(+). Its pathway is amino-acid biosynthesis; L-lysine biosynthesis via DAP pathway; (S)-tetrahydrodipicolinate from L-aspartate: step 4/4. In terms of biological role, catalyzes the conversion of 4-hydroxy-tetrahydrodipicolinate (HTPA) to tetrahydrodipicolinate. The chain is 4-hydroxy-tetrahydrodipicolinate reductase from Rickettsia conorii (strain ATCC VR-613 / Malish 7).